Here is a 393-residue protein sequence, read N- to C-terminus: MKRNPNFTSLTQNYLFSDLRNRIAQFHSENPQHQVINLSIGDTTQPLDTSVAEAFSQAIARFSSPSTYCGYGPDFGLPSLRQKLSEKLYHGCVNAEEIFISDGAKVDLFRLLSFFGPNQIVAVQDPSYPAYIDIARLTGAKEIVSLPCLQENDFLPVFPENTHIDILCLCSPNNPTGTALNKNQLRAIVRYAIEHNILILFDAAYSAFISAPSLPKSIFEIPDARFCAIEINSFSKSLGFAGIRLGWTVIPKELTYEDGQPIIRDWKRFLSTTFNGASIPAQEAATAGLSTLSKLEAVHYYKENSHLLKTSLLKAGFQVFGGEHAPYLWVKPTIETVPYRDLFDFFLQEYHIAITPGIGFGLCGSGFVRFSSLGKREDVLVACERLQMTPALQ.

Positions 14 and 41 each coordinate substrate. Residues Y71, 104–105, Y128, N174, Y205, and 233–235 each bind pyridoxal 5'-phosphate; these read AK and SFS. Substrate is bound by residues K105, Y128, and N174. At K236 the chain carries N6-(pyridoxal phosphate)lysine. Residues R244 and N275 each coordinate pyridoxal 5'-phosphate. Residues N275 and R369 each coordinate substrate.

It belongs to the class-I pyridoxal-phosphate-dependent aminotransferase family. LL-diaminopimelate aminotransferase subfamily. As to quaternary structure, homodimer. The cofactor is pyridoxal 5'-phosphate.

The enzyme catalyses (2S,6S)-2,6-diaminopimelate + 2-oxoglutarate = (S)-2,3,4,5-tetrahydrodipicolinate + L-glutamate + H2O + H(+). The protein operates within amino-acid biosynthesis; L-lysine biosynthesis via DAP pathway; LL-2,6-diaminopimelate from (S)-tetrahydrodipicolinate (aminotransferase route): step 1/1. In terms of biological role, involved in the synthesis of meso-diaminopimelate (m-DAP or DL-DAP), required for both lysine and peptidoglycan biosynthesis. Catalyzes the direct conversion of tetrahydrodipicolinate to LL-diaminopimelate. This chain is LL-diaminopimelate aminotransferase, found in Chlamydia muridarum (strain MoPn / Nigg).